Consider the following 146-residue polypeptide: D-aminoacyl-tRNA deacylase (146 aa).

A Gly-cisPro motif, important for rejection of L-amino acids motif is present at residues 137–138 (GP).

This sequence belongs to the DTD family. In terms of assembly, homodimer.

It is found in the cytoplasm. It carries out the reaction glycyl-tRNA(Ala) + H2O = tRNA(Ala) + glycine + H(+). The enzyme catalyses a D-aminoacyl-tRNA + H2O = a tRNA + a D-alpha-amino acid + H(+). Functionally, an aminoacyl-tRNA editing enzyme that deacylates mischarged D-aminoacyl-tRNAs. Also deacylates mischarged glycyl-tRNA(Ala), protecting cells against glycine mischarging by AlaRS. Acts via tRNA-based rather than protein-based catalysis; rejects L-amino acids rather than detecting D-amino acids in the active site. By recycling D-aminoacyl-tRNA to D-amino acids and free tRNA molecules, this enzyme counteracts the toxicity associated with the formation of D-aminoacyl-tRNA entities in vivo and helps enforce protein L-homochirality. In Bacillus mycoides (strain KBAB4) (Bacillus weihenstephanensis), this protein is D-aminoacyl-tRNA deacylase.